The primary structure comprises 204 residues: Guanylate kinase (204 aa).

The Guanylate kinase-like domain maps to 5-184 (GLLIVLSGPS…ACDKIKAIVL (180 aa)). An ATP-binding site is contributed by 12 to 19 (GPSGVGKG).

It belongs to the guanylate kinase family.

It is found in the cytoplasm. It catalyses the reaction GMP + ATP = GDP + ADP. In terms of biological role, essential for recycling GMP and indirectly, cGMP. The polypeptide is Guanylate kinase (gmk) (Bacillus subtilis (strain 168)).